Consider the following 374-residue polypeptide: Flagellar P-ring protein 1 (374 aa).

The N-terminal stretch at 1–29 (MPGVRWVRIVGVACAALSALALSVTSASA) is a signal peptide.

It belongs to the FlgI family. In terms of assembly, the basal body constitutes a major portion of the flagellar organelle and consists of four rings (L,P,S, and M) mounted on a central rod.

Its subcellular location is the periplasm. The protein resides in the bacterial flagellum basal body. Its function is as follows. Assembles around the rod to form the L-ring and probably protects the motor/basal body from shearing forces during rotation. This chain is Flagellar P-ring protein 1, found in Bradyrhizobium diazoefficiens (strain JCM 10833 / BCRC 13528 / IAM 13628 / NBRC 14792 / USDA 110).